The chain runs to 41 residues: Photosystem I reaction center subunit IX (41 aa).

Residues 7–27 (YLSTAPVLATLWFGFLAGLLI) form a helical membrane-spanning segment.

The protein belongs to the PsaJ family.

Its subcellular location is the plastid. It is found in the chloroplast thylakoid membrane. Its function is as follows. May help in the organization of the PsaE and PsaF subunits. The polypeptide is Photosystem I reaction center subunit IX (Physcomitrium patens (Spreading-leaved earth moss)).